The sequence spans 744 residues: 1,4-alpha-glucan branching enzyme GlgB (744 aa).

Catalysis depends on aspartate 415, which acts as the Nucleophile. Glutamate 468 (proton donor) is an active-site residue.

Belongs to the glycosyl hydrolase 13 family. GlgB subfamily. Monomer.

The enzyme catalyses Transfers a segment of a (1-&gt;4)-alpha-D-glucan chain to a primary hydroxy group in a similar glucan chain.. Its pathway is glycan biosynthesis; glycogen biosynthesis. Functionally, catalyzes the formation of the alpha-1,6-glucosidic linkages in glycogen by scission of a 1,4-alpha-linked oligosaccharide from growing alpha-1,4-glucan chains and the subsequent attachment of the oligosaccharide to the alpha-1,6 position. This chain is 1,4-alpha-glucan branching enzyme GlgB, found in Shewanella frigidimarina (strain NCIMB 400).